A 61-amino-acid chain; its full sequence is Large ribosomal subunit protein bL32 (61 aa).

The span at 1-22 (MAVPKKKTSKSRRDMRRSHHAL) shows a compositional bias: basic residues. The tract at residues 1–27 (MAVPKKKTSKSRRDMRRSHHALKPSAY) is disordered.

It belongs to the bacterial ribosomal protein bL32 family.

This chain is Large ribosomal subunit protein bL32, found in Rhodospirillum rubrum (strain ATCC 11170 / ATH 1.1.1 / DSM 467 / LMG 4362 / NCIMB 8255 / S1).